Here is a 109-residue protein sequence, read N- to C-terminus: Probable sulredoxin (109 aa).

Positions 3–107 (WKRTISAKAL…IRDNGGWIEV (105 aa)) constitute a Rieske domain. Positions 43, 45, 62, and 65 each coordinate [2Fe-2S] cluster.

It belongs to the SDX family. It depends on [2Fe-2S] cluster as a cofactor.

It localises to the cytoplasm. The chain is Probable sulredoxin (sdx) from Saccharolobus solfataricus (strain ATCC 35092 / DSM 1617 / JCM 11322 / P2) (Sulfolobus solfataricus).